The following is a 108-amino-acid chain: MSFSRRPKITKSDIVDQISLNIRNNNLKLEKKYIRLVIDAFFEELKGNLCLNNVIEFRSFGTFEVRKRKGRLNARNPQTGEYVKVLDHHVAYFRPGKDLKERVWGIKG.

The protein belongs to the bacterial histone-like protein family.

Functionally, histone-like DNA-binding protein which is capable of wrapping DNA to stabilize it, and thus to prevent its denaturation under extreme environmental conditions. The protein is DNA-binding protein HBbu (hbb) of Borrelia garinii subsp. bavariensis (strain ATCC BAA-2496 / DSM 23469 / PBi) (Borreliella bavariensis).